The following is a 150-amino-acid chain: SsrA-binding protein (150 aa).

This sequence belongs to the SmpB family.

The protein localises to the cytoplasm. Functionally, required for rescue of stalled ribosomes mediated by trans-translation. Binds to transfer-messenger RNA (tmRNA), required for stable association of tmRNA with ribosomes. tmRNA and SmpB together mimic tRNA shape, replacing the anticodon stem-loop with SmpB. tmRNA is encoded by the ssrA gene; the 2 termini fold to resemble tRNA(Ala) and it encodes a 'tag peptide', a short internal open reading frame. During trans-translation Ala-aminoacylated tmRNA acts like a tRNA, entering the A-site of stalled ribosomes, displacing the stalled mRNA. The ribosome then switches to translate the ORF on the tmRNA; the nascent peptide is terminated with the 'tag peptide' encoded by the tmRNA and targeted for degradation. The ribosome is freed to recommence translation, which seems to be the essential function of trans-translation. The polypeptide is SsrA-binding protein (Magnetococcus marinus (strain ATCC BAA-1437 / JCM 17883 / MC-1)).